The primary structure comprises 329 residues: Lipoyl synthase (329 aa).

[4Fe-4S] cluster-binding residues include Cys55, Cys60, Cys66, Cys81, Cys85, Cys88, and Ser292. Residues 67-281 (WEDREATFLI…KAEAEAIGFL (215 aa)) enclose the Radical SAM core domain.

This sequence belongs to the radical SAM superfamily. Lipoyl synthase family. [4Fe-4S] cluster is required as a cofactor.

It is found in the cytoplasm. The catalysed reaction is [[Fe-S] cluster scaffold protein carrying a second [4Fe-4S](2+) cluster] + N(6)-octanoyl-L-lysyl-[protein] + 2 oxidized [2Fe-2S]-[ferredoxin] + 2 S-adenosyl-L-methionine + 4 H(+) = [[Fe-S] cluster scaffold protein] + N(6)-[(R)-dihydrolipoyl]-L-lysyl-[protein] + 4 Fe(3+) + 2 hydrogen sulfide + 2 5'-deoxyadenosine + 2 L-methionine + 2 reduced [2Fe-2S]-[ferredoxin]. Its pathway is protein modification; protein lipoylation via endogenous pathway; protein N(6)-(lipoyl)lysine from octanoyl-[acyl-carrier-protein]: step 2/2. Catalyzes the radical-mediated insertion of two sulfur atoms into the C-6 and C-8 positions of the octanoyl moiety bound to the lipoyl domains of lipoate-dependent enzymes, thereby converting the octanoylated domains into lipoylated derivatives. The polypeptide is Lipoyl synthase (Clavibacter sepedonicus (Clavibacter michiganensis subsp. sepedonicus)).